We begin with the raw amino-acid sequence, 459 residues long: Ribulose bisphosphate carboxylase large chain (459 aa).

Lys-4 is subject to N6,N6,N6-trimethyllysine. Positions 113 and 163 each coordinate substrate. The Proton acceptor role is filled by Lys-165. A substrate-binding site is contributed by Lys-167. Mg(2+) is bound by residues Lys-191, Asp-193, and Glu-194. The residue at position 191 (Lys-191) is an N6-carboxylysine. Catalysis depends on His-284, which acts as the Proton acceptor. Substrate is bound by residues Arg-285, His-317, and Ser-369.

This sequence belongs to the RuBisCO large chain family. Type I subfamily. Heterohexadecamer of 8 large chains and 8 small chains; disulfide-linked. The disulfide link is formed within the large subunit homodimers. Mg(2+) serves as cofactor. Post-translationally, the disulfide bond which can form in the large chain dimeric partners within the hexadecamer appears to be associated with oxidative stress and protein turnover.

The protein resides in the plastid. It localises to the chloroplast. It carries out the reaction 2 (2R)-3-phosphoglycerate + 2 H(+) = D-ribulose 1,5-bisphosphate + CO2 + H2O. It catalyses the reaction D-ribulose 1,5-bisphosphate + O2 = 2-phosphoglycolate + (2R)-3-phosphoglycerate + 2 H(+). RuBisCO catalyzes two reactions: the carboxylation of D-ribulose 1,5-bisphosphate, the primary event in carbon dioxide fixation, as well as the oxidative fragmentation of the pentose substrate in the photorespiration process. Both reactions occur simultaneously and in competition at the same active site. This Roridula gorgonias (South African fly bush) protein is Ribulose bisphosphate carboxylase large chain.